A 273-amino-acid chain; its full sequence is Dermonecrotic toxin LhSicTox-alphaIA2ai (273 aa).

Residue His5 is part of the active site. Mg(2+)-binding residues include Glu25 and Asp27. His41 acts as the Nucleophile in catalysis. Intrachain disulfides connect Cys45/Cys51 and Cys47/Cys190. Asp85 serves as a coordination point for Mg(2+).

It belongs to the arthropod phospholipase D family. Class II subfamily. It depends on Mg(2+) as a cofactor. In terms of tissue distribution, expressed by the venom gland.

It is found in the secreted. It catalyses the reaction an N-(acyl)-sphingosylphosphocholine = an N-(acyl)-sphingosyl-1,3-cyclic phosphate + choline. The catalysed reaction is an N-(acyl)-sphingosylphosphoethanolamine = an N-(acyl)-sphingosyl-1,3-cyclic phosphate + ethanolamine. The enzyme catalyses a 1-acyl-sn-glycero-3-phosphocholine = a 1-acyl-sn-glycero-2,3-cyclic phosphate + choline. It carries out the reaction a 1-acyl-sn-glycero-3-phosphoethanolamine = a 1-acyl-sn-glycero-2,3-cyclic phosphate + ethanolamine. In terms of biological role, dermonecrotic toxins cleave the phosphodiester linkage between the phosphate and headgroup of certain phospholipids (sphingolipid and lysolipid substrates), forming an alcohol (often choline) and a cyclic phosphate. This toxin acts on sphingomyelin (SM). It may also act on ceramide phosphoethanolamine (CPE), lysophosphatidylcholine (LPC) and lysophosphatidylethanolamine (LPE), but not on lysophosphatidylserine (LPS), and lysophosphatidylglycerol (LPG). It acts by transphosphatidylation, releasing exclusively cyclic phosphate products as second products. Induces dermonecrosis, hemolysis, increased vascular permeability, edema, inflammatory response, and platelet aggregation. The polypeptide is Dermonecrotic toxin LhSicTox-alphaIA2ai (Loxosceles hirsuta (Recluse spider)).